Reading from the N-terminus, the 630-residue chain is Threonine--tRNA ligase (630 aa).

An editing domain region spans residues 1–137 (MKVLLIHSDY…PLSELSRKIT (137 aa)). The segment at 207–506 (PHVKFITEKE…ADAGAPPMLP (300 aa)) is catalytic. Residues C299, H351, and H475 each coordinate Zn(2+).

Belongs to the class-II aminoacyl-tRNA synthetase family. Homodimer. It depends on Zn(2+) as a cofactor.

It is found in the cytoplasm. The enzyme catalyses tRNA(Thr) + L-threonine + ATP = L-threonyl-tRNA(Thr) + AMP + diphosphate + H(+). Its function is as follows. Catalyzes the attachment of threonine to tRNA(Thr) in a two-step reaction: L-threonine is first activated by ATP to form Thr-AMP and then transferred to the acceptor end of tRNA(Thr). Also edits incorrectly charged L-seryl-tRNA(Thr). This chain is Threonine--tRNA ligase, found in Methanococcus aeolicus (strain ATCC BAA-1280 / DSM 17508 / OCM 812 / Nankai-3).